The sequence spans 477 residues: Zinc metalloproteinase/disintegrin (477 aa).

Positions 1-19 are cleaved as a signal peptide; it reads MIQVLLVIICLAVPYQGSS. Residues 20 to 186 constitute a propeptide that is removed on maturation; the sequence is IILESGNVND…PIKKASQSNL (167 aa). Residues 192-388 enclose the Peptidase M12B domain; it reads RYIELVIVAD…QKPQCILNKP (197 aa). 2 residues coordinate Ca(2+): E195 and D279. 3 disulfides stabilise this stretch: C303–C383, C343–C367, and C345–C350. H328 is a binding site for Zn(2+). The active site involves E329. Zn(2+) contacts are provided by H332 and H338. Ca(2+) is bound by residues C383 and N386. Residues 389 to 404 constitute a propeptide that is removed on maturation; the sequence is LRTDTVSTPVSGNELL. In terms of domain architecture, Disintegrin spans 396–477; that stretch reads TPVSGNELLE…AGCPRNPFHA (82 aa). Intrachain disulfides connect C410-C425, C412-C420, C419-C442, C433-C439, C438-C463, and C451-C470. The Cell attachment site signature appears at 455 to 457; it reads RGD.

This sequence belongs to the venom metalloproteinase (M12B) family. P-II subfamily. P-IIa sub-subfamily. In terms of assembly, monomer. Requires Zn(2+) as cofactor. Expressed by the venom gland.

The protein resides in the secreted. In terms of biological role, impairs hemostasis in the envenomed animal. Inhibits platelet aggregation induced by ADP, thrombin, platelet-activating factor and collagen. Acts by inhibiting fibrinogen interaction with platelet receptors GPIIb/GPIIIa (ITGA2B/ITGB3). The polypeptide is Zinc metalloproteinase/disintegrin (Gloydius halys (Chinese water mocassin)).